Reading from the N-terminus, the 618-residue chain is Glutamine--fructose-6-phosphate aminotransferase [isomerizing] (618 aa).

Catalysis depends on cysteine 2, which acts as the Nucleophile; for GATase activity. A Glutamine amidotransferase type-2 domain is found at 2–226 (CGIVGYAGRN…DFETAVLSPT (225 aa)). Residues 69-94 (HTRWATHGRPSTKNAHPHNSGGNPGK) are disordered. SIS domains lie at 295–434 (SEDE…VRDR) and 467–608 (CAEG…IDKP). The active-site For Fru-6P isomerization activity is lysine 613.

In terms of assembly, homodimer.

The protein localises to the cytoplasm. It carries out the reaction D-fructose 6-phosphate + L-glutamine = D-glucosamine 6-phosphate + L-glutamate. In terms of biological role, catalyzes the first step in hexosamine metabolism, converting fructose-6P into glucosamine-6P using glutamine as a nitrogen source. In Methanosarcina acetivorans (strain ATCC 35395 / DSM 2834 / JCM 12185 / C2A), this protein is Glutamine--fructose-6-phosphate aminotransferase [isomerizing].